A 555-amino-acid chain; its full sequence is Luciferin 2-monooxygenase (555 aa).

Positions 1–11 are cleaved as a signal peptide; that stretch reads MKIIILSVILA. VWFD domains lie at 80-266 and 319-494; these read IECR…EYCK and GTCV…RLCN. Intrachain disulfides connect cysteine 82–cysteine 222, cysteine 321–cysteine 454, cysteine 343–cysteine 493, and cysteine 352–cysteine 451. 2 N-linked (GlcNAc...) asparagine glycosylation sites follow: asparagine 186 and asparagine 408.

The cysteine residues presumably exist in intramolecular disulfide bridges. Post-translationally, the N-terminus is blocked.

The enzyme catalyses Cypridina luciferin + O2 = oxidized Cypridina luciferin + hnu + CO2. The sequence is that of Luciferin 2-monooxygenase from Vargula hilgendorfii (Sea firefly).